A 273-amino-acid chain; its full sequence is Thioredoxin-like 1-3, chloroplastic (273 aa).

A chloroplast-targeting transit peptide spans 1–44 (MATDSFIKLNPISFNRARFDLRDFAGISPKSISSLCCISPRLIS). One can recognise a Thioredoxin domain in the interval 62-202 (LFSKKKIPAF…FKEALEKHGR (141 aa)). Catalysis depends on nucleophile residues Cys125 and Cys128. A disulfide bridge links Cys125 with Cys128.

The protein belongs to the thioredoxin family.

It is found in the plastid. The protein localises to the chloroplast. Functionally, probable thiol-disulfide oxidoreductase that may participate in various redox reactions. The chain is Thioredoxin-like 1-3, chloroplastic from Arabidopsis thaliana (Mouse-ear cress).